We begin with the raw amino-acid sequence, 1182 residues long: Myosin IC heavy chain (1182 aa).

The Myosin motor domain maps to 15–698; sequence EGLDDMTLLS…MLFSLEETRE (684 aa). 109–116 is an ATP binding site; it reads GESGAGKT. The interval 571-593 is actin-binding; the sequence is AAELVATLMKSTPHYIRTIKPND. Residues 774–957 form the TH1 domain; sequence RNRFSMISVR…QFHIASGLPA (184 aa). Disordered regions lie at residues 999 to 1052 and 1064 to 1103; these read KPAP…PAPG and SKPL…PAGQ. Over residues 1013 to 1042 the composition is skewed to low complexity; the sequence is KKPAPTAPGGAPMMKKPAPAPGGAPMMKKP. Residues 1081–1092 show a composition bias toward pro residues; that stretch reads PTAPGGPAPAGA. An SH3 domain is found at 1123-1182; the sequence is PPPQQYIALYEYDAMQPDELTFKENDVINLIKKVDADWWQGELVRTKQIGMLPSNYVQQI.

Belongs to the TRAFAC class myosin-kinesin ATPase superfamily. Myosin family. In terms of assembly, myosin I heavy chain is single-headed. Dimer of a heavy and a light chain. Inability to self-assemble into filaments.

Its subcellular location is the cell projection. The protein resides in the lamellipodium. Myosin is a protein that binds to actin and has ATPase activity that is activated by actin. Involved in the process of phagocytosis and appears to support streaming behavior. This chain is Myosin IC heavy chain (myoC), found in Dictyostelium discoideum (Social amoeba).